Reading from the N-terminus, the 752-residue chain is Mitochondrial Rho GTPase 1 (752 aa).

The Cytoplasmic segment spans residues methionine 1–arginine 671. The 169-residue stretch at arginine 2–tyrosine 170 folds into the Miro 1 domain. GTP-binding positions include glycine 11 to serine 18, aspartate 57 to serine 61, and asparagine 115 to aspartate 118. EF-hand domains follow at residues alanine 186 to threonine 221 and asparagine 333 to asparagine 368. The Ca(2+) site is built by aspartate 199, aspartate 201, aspartate 203, glutamate 210, aspartate 346, aspartate 348, aspartate 350, and glutamate 357. Residues serine 426–isoleucine 460 are disordered. The span at alanine 434–serine 446 shows a compositional bias: pro residues. One can recognise a Miro 2 domain in the interval arginine 481 to aspartate 651. GTP is bound by residues glycine 490 to threonine 497, glutamate 526 to alanine 530, and threonine 595 to aspartate 598. A helical; Anchor for type IV membrane protein membrane pass occupies residues tryptophan 672–cysteine 692. At alanine 693–leucine 752 the chain is on the mitochondrial intermembrane side.

It belongs to the mitochondrial Rho GTPase family.

It localises to the mitochondrion outer membrane. In terms of biological role, mitochondrial GTPase involved in mitochondrial trafficking. Probably involved in control of anterograde transport of mitochondria and their subcellular distribution. This is Mitochondrial Rho GTPase 1 (GEM1) from Mycosarcoma maydis (Corn smut fungus).